The primary structure comprises 186 residues: Proline-rich protein 3 (186 aa).

A disordered region spans residues 1-97 (MPKRKKQNQP…LGPRSSPYGR (97 aa)). Pro residues-rich tracts occupy residues 33-44 (MGPPSLLGPPPM) and 67-79 (MIPP…PPPR). The segment at 153-181 (KSDRPVCRHFSKKGHCRYEDHCAFYHPGV) adopts a C3H1-type zinc-finger fold.

This chain is Proline-rich protein 3 (Prr3), found in Rattus norvegicus (Rat).